The sequence spans 640 residues: UvrABC system protein C (640 aa).

A GIY-YIG domain is found at 35-113 (DAPGVYRMIG…IKQLKPRFNV (79 aa)). One can recognise a UVR domain in the interval 223 to 258 (RAVMATMAKAMEEAAEELEFERAARLRDRIRALSAV).

The protein belongs to the UvrC family. As to quaternary structure, interacts with UvrB in an incision complex.

It is found in the cytoplasm. Its function is as follows. The UvrABC repair system catalyzes the recognition and processing of DNA lesions. UvrC both incises the 5' and 3' sides of the lesion. The N-terminal half is responsible for the 3' incision and the C-terminal half is responsible for the 5' incision. This is UvrABC system protein C from Caulobacter vibrioides (strain ATCC 19089 / CIP 103742 / CB 15) (Caulobacter crescentus).